The sequence spans 3459 residues: uncharacterized protein (3459 aa).

Over residues 158–167 (NDDDWIFNED) the composition is skewed to acidic residues. 2 disordered regions span residues 158-230 (NDDD…NNNN) and 400-447 (YGYI…NDEK). Residues 168–184 (DEKKNKNNDGNDNRYDY) are compositionally biased toward basic and acidic residues. Residues 185 to 201 (NDLQNNNNNDNNKYDYN) show a composition bias toward low complexity. A compositionally biased stretch (basic and acidic residues) spans 204-221 (DDEKKNKNNDGDDNKYDY). Residues 406–443 (DNDDGDDYNDDNDNDDNYNDDNYNDDNYNDDNYNDDNY) are compositionally biased toward acidic residues. The stretch at 771-851 (VNEKKKGENE…NEMNKDEENE (81 aa)) forms a coiled coil. The chain crosses the membrane as a helical span at residues 1059–1079 (LIYMIYLFFTYKKYDLLLMFI). Disordered regions lie at residues 1148–1187 (RRQE…NDYD), 1399–1467 (IPTQ…NDDD), and 1711–1733 (QKKK…NKEN). Positions 1404–1463 (DKNETDEGNKNETDEGDKNETDEGDKNETDEGNKNETEEIYKNETDEGNKNETEEIYKND) are enriched in basic and acidic residues. 2 consecutive transmembrane segments (helical) span residues 2059 to 2079 (FLLF…IFFF) and 2197 to 2217 (IIQC…DFLF). Disordered regions lie at residues 2582 to 2644 (IYKD…DNNN) and 2776 to 2835 (GRIW…DKGD). A compositionally biased stretch (acidic residues) spans 2592-2629 (DNNDDDNINDDDNINDDDNINDDDNNNDDDNNNDDNND). Residues 2779–2821 (WKREENGEKKKNEKNESEKNERNEKNEKNEKHEKHEKHEKNEK) are compositionally biased toward basic and acidic residues. Positions 2785-2820 (GEKKKNEKNESEKNERNEKNEKNEKHEKHEKHEKNE) form a coiled coil. The next 2 helical transmembrane spans lie at 3229–3249 (LFII…SFIL) and 3296–3316 (LLFF…NINS).

The protein localises to the membrane. This is an uncharacterized protein from Plasmodium falciparum (isolate 3D7).